Here is a 177-residue protein sequence, read N- to C-terminus: Peptide deformylase 2 (177 aa).

Residues Cys-99 and His-141 each coordinate Fe cation. Residue Glu-142 is part of the active site. His-145 lines the Fe cation pocket.

This sequence belongs to the polypeptide deformylase family. Fe(2+) is required as a cofactor.

The catalysed reaction is N-terminal N-formyl-L-methionyl-[peptide] + H2O = N-terminal L-methionyl-[peptide] + formate. Functionally, removes the formyl group from the N-terminal Met of newly synthesized proteins. Requires at least a dipeptide for an efficient rate of reaction. N-terminal L-methionine is a prerequisite for activity but the enzyme has broad specificity at other positions. The protein is Peptide deformylase 2 of Ralstonia nicotianae (strain ATCC BAA-1114 / GMI1000) (Ralstonia solanacearum).